Here is a 473-residue protein sequence, read N- to C-terminus: Probable DNA N(6)-methyladenine demethylase ALKBH1B (473 aa).

357–359 lines the 2-oxoglutarate pocket; sequence NFY. Residues H368, D391, and H449 each coordinate Fe cation. A 2-oxoglutarate-binding site is contributed by 461–465; sequence RLFFR.

The protein belongs to the alkB family. Requires Fe(2+) as cofactor. In terms of tissue distribution, undetectable.

The catalysed reaction is an N(6)-methyl-2'-deoxyadenosine in DNA + 2-oxoglutarate + O2 = a 2'-deoxyadenosine in DNA + formaldehyde + succinate + CO2. In terms of biological role, dioxygenase that may catalyzes DNA N(6)-methyladenine (6 mA) demethylation. Requires molecular oxygen, alpha-ketoglutarate and iron. The chain is Probable DNA N(6)-methyladenine demethylase ALKBH1B from Arabidopsis thaliana (Mouse-ear cress).